The sequence spans 138 residues: Small ribosomal subunit protein uS11c (138 aa).

It belongs to the universal ribosomal protein uS11 family. Part of the 30S ribosomal subunit.

Its subcellular location is the plastid. It is found in the chloroplast. The polypeptide is Small ribosomal subunit protein uS11c (Nandina domestica (Heavenly bamboo)).